Consider the following 283-residue polypeptide: Pantothenate synthetase (283 aa).

Residue 34–41 (MGALHDGH) coordinates ATP. His41 acts as the Proton donor in catalysis. Gln65 provides a ligand contact to (R)-pantoate. A beta-alanine-binding site is contributed by Gln65. 152–155 (GSKD) contacts ATP. Gln158 contributes to the (R)-pantoate binding site. ATP contacts are provided by residues Ile181 and 189 to 192 (MSSR).

Belongs to the pantothenate synthetase family. In terms of assembly, homodimer.

The protein resides in the cytoplasm. The enzyme catalyses (R)-pantoate + beta-alanine + ATP = (R)-pantothenate + AMP + diphosphate + H(+). It participates in cofactor biosynthesis; (R)-pantothenate biosynthesis; (R)-pantothenate from (R)-pantoate and beta-alanine: step 1/1. Its function is as follows. Catalyzes the condensation of pantoate with beta-alanine in an ATP-dependent reaction via a pantoyl-adenylate intermediate. This Rhodopseudomonas palustris (strain HaA2) protein is Pantothenate synthetase.